The sequence spans 389 residues: tRNA(Met) cytidine acetate ligase (389 aa).

ATP is bound by residues 8 to 21 (IAEFNPFHKGHEYL), Gly97, Asn153, and Arg176.

This sequence belongs to the TmcAL family.

It is found in the cytoplasm. It catalyses the reaction cytidine(34) in elongator tRNA(Met) + acetate + ATP = N(4)-acetylcytidine(34) in elongator tRNA(Met) + AMP + diphosphate. Functionally, catalyzes the formation of N(4)-acetylcytidine (ac(4)C) at the wobble position of elongator tRNA(Met), using acetate and ATP as substrates. First activates an acetate ion to form acetyladenylate (Ac-AMP) and then transfers the acetyl group to tRNA to form ac(4)C34. This chain is tRNA(Met) cytidine acetate ligase, found in Lactococcus lactis subsp. lactis (strain IL1403) (Streptococcus lactis).